The primary structure comprises 258 residues: Putative L-lactate dehydrogenase operon regulatory protein (258 aa).

The 69-residue stretch at 6 to 74 (RRLSDEVADR…RGGGTFIRWR (69 aa)) folds into the HTH gntR-type domain. Positions 34–53 (ERQLAMQLGVSRNSLREALA) form a DNA-binding region, H-T-H motif.

Functionally, may be a regulatory protein for the LCT genes. In Escherichia coli (strain K12), this protein is Putative L-lactate dehydrogenase operon regulatory protein (lldR).